The chain runs to 98 residues: NADH-ubiquinone oxidoreductase chain 4L (98 aa).

3 consecutive transmembrane segments (helical) span residues M1–I21, T29–T49, and T59–V79.

The protein belongs to the complex I subunit 4L family. Core subunit of respiratory chain NADH dehydrogenase (Complex I) which is composed of 45 different subunits.

Its subcellular location is the mitochondrion inner membrane. It carries out the reaction a ubiquinone + NADH + 5 H(+)(in) = a ubiquinol + NAD(+) + 4 H(+)(out). Its function is as follows. Core subunit of the mitochondrial membrane respiratory chain NADH dehydrogenase (Complex I) which catalyzes electron transfer from NADH through the respiratory chain, using ubiquinone as an electron acceptor. Part of the enzyme membrane arm which is embedded in the lipid bilayer and involved in proton translocation. This chain is NADH-ubiquinone oxidoreductase chain 4L (MT-ND4L), found in Sminthopsis crassicaudata (Fat-tailed dunnart).